The sequence spans 362 residues: Dihydroorotate dehydrogenase (quinone) (362 aa).

FMN is bound by residues 62–66 (AGYDK) and Thr-86. Lys-66 is a substrate binding site. A substrate-binding site is contributed by 111–115 (NRLGF). Residues Asn-139 and Asn-170 each contribute to the FMN site. A substrate-binding site is contributed by Asn-170. Residue Ser-173 is the Nucleophile of the active site. Asn-175 serves as a coordination point for substrate. FMN contacts are provided by Lys-215 and Ser-243. 244–245 (NT) contacts substrate. Residues Gly-266, Gly-295, and 316-317 (YS) contribute to the FMN site.

This sequence belongs to the dihydroorotate dehydrogenase family. Type 2 subfamily. As to quaternary structure, monomer. Requires FMN as cofactor.

It is found in the cell membrane. It catalyses the reaction (S)-dihydroorotate + a quinone = orotate + a quinol. Its pathway is pyrimidine metabolism; UMP biosynthesis via de novo pathway; orotate from (S)-dihydroorotate (quinone route): step 1/1. Catalyzes the conversion of dihydroorotate to orotate with quinone as electron acceptor. The protein is Dihydroorotate dehydrogenase (quinone) of Rhizobium etli (strain CIAT 652).